Here is a 357-residue protein sequence, read N- to C-terminus: Pheromone receptor 1 (357 aa).

7 helical membrane-spanning segments follow: residues 5 to 25, 32 to 52, 67 to 90, 110 to 130, 145 to 165, 206 to 226, and 268 to 288; these read ITPFFALVAFFLVLMPFAWHI, LIMLSIWLMLGNLDNFVNSMV, LSVRLRHLLFIAIPASNLAIARKL, VIIDLLICLGIPIIYTSLMIV, WPMMVFSWLWVLLVAAPVIVV, LLLLTAIDMLLFFPIYVGTIA, and LILARLVCPLSAYIFFAMFGL. A disordered region spans residues 338-357; it reads ANTSTKSEKSDIDMRGSEAA. The segment covering 343-357 has biased composition (basic and acidic residues); sequence KSEKSDIDMRGSEAA.

It belongs to the G-protein coupled receptor 4 family.

Its subcellular location is the membrane. Functionally, receptor for the A2 pheromone, a prenylated mating factor. This is Pheromone receptor 1 (PRA1) from Mycosarcoma maydis (Corn smut fungus).